The primary structure comprises 95 residues: Aspartyl/glutamyl-tRNA(Asn/Gln) amidotransferase subunit C (95 aa).

It belongs to the GatC family. As to quaternary structure, heterotrimer of A, B and C subunits.

The catalysed reaction is L-glutamyl-tRNA(Gln) + L-glutamine + ATP + H2O = L-glutaminyl-tRNA(Gln) + L-glutamate + ADP + phosphate + H(+). It catalyses the reaction L-aspartyl-tRNA(Asn) + L-glutamine + ATP + H2O = L-asparaginyl-tRNA(Asn) + L-glutamate + ADP + phosphate + 2 H(+). Its function is as follows. Allows the formation of correctly charged Asn-tRNA(Asn) or Gln-tRNA(Gln) through the transamidation of misacylated Asp-tRNA(Asn) or Glu-tRNA(Gln) in organisms which lack either or both of asparaginyl-tRNA or glutaminyl-tRNA synthetases. The reaction takes place in the presence of glutamine and ATP through an activated phospho-Asp-tRNA(Asn) or phospho-Glu-tRNA(Gln). The sequence is that of Aspartyl/glutamyl-tRNA(Asn/Gln) amidotransferase subunit C from Lysinibacillus sphaericus (strain C3-41).